We begin with the raw amino-acid sequence, 627 residues long: Chaperone protein DnaK (627 aa).

Thr-197 is modified (phosphothreonine; by autocatalysis). Low complexity predominate over residues 596-615 (MYAQGGDQGQQAAPQQEQSG). The segment at 596–627 (MYAQGGDQGQQAAPQQEQSGDNVEDVEFEEVK) is disordered. Residues 617-627 (NVEDVEFEEVK) are compositionally biased toward acidic residues.

It belongs to the heat shock protein 70 family.

In terms of biological role, acts as a chaperone. In Flavobacterium johnsoniae (strain ATCC 17061 / DSM 2064 / JCM 8514 / BCRC 14874 / CCUG 350202 / NBRC 14942 / NCIMB 11054 / UW101) (Cytophaga johnsonae), this protein is Chaperone protein DnaK.